We begin with the raw amino-acid sequence, 131 residues long: Small ribosomal subunit protein uS8 (131 aa).

This sequence belongs to the universal ribosomal protein uS8 family. Part of the 30S ribosomal subunit. Contacts proteins S5 and S12.

In terms of biological role, one of the primary rRNA binding proteins, it binds directly to 16S rRNA central domain where it helps coordinate assembly of the platform of the 30S subunit. This is Small ribosomal subunit protein uS8 from Burkholderia multivorans (strain ATCC 17616 / 249).